A 378-amino-acid polypeptide reads, in one-letter code: Erythronate-4-phosphate dehydrogenase (378 aa).

Residues Ser-45 and Thr-66 each coordinate substrate. NAD(+) contacts are provided by Asp-142 and Thr-169. Arg-202 is an active-site residue. Asp-226 provides a ligand contact to NAD(+). Glu-231 is an active-site residue. The active-site Proton donor is His-248. NAD(+) is bound at residue Gly-251. Tyr-252 is a binding site for substrate.

Belongs to the D-isomer specific 2-hydroxyacid dehydrogenase family. PdxB subfamily. As to quaternary structure, homodimer.

It is found in the cytoplasm. The catalysed reaction is 4-phospho-D-erythronate + NAD(+) = (R)-3-hydroxy-2-oxo-4-phosphooxybutanoate + NADH + H(+). The protein operates within cofactor biosynthesis; pyridoxine 5'-phosphate biosynthesis; pyridoxine 5'-phosphate from D-erythrose 4-phosphate: step 2/5. Its function is as follows. Catalyzes the oxidation of erythronate-4-phosphate to 3-hydroxy-2-oxo-4-phosphonooxybutanoate. In Cellvibrio japonicus (strain Ueda107) (Pseudomonas fluorescens subsp. cellulosa), this protein is Erythronate-4-phosphate dehydrogenase.